The following is a 150-amino-acid chain: Propanediol utilization protein PduV (150 aa).

Residues M1–D42 form a targets protein to the BMC region. G8–T15 serves as a coordination point for GTP.

The protein belongs to the EutP/PduV family. In terms of assembly, interacts with PduU, probably via the PduU beta-barrel which is predicted by modeling to be on the exterior of the BMC.

The protein localises to the bacterial microcompartment. It functions in the pathway polyol metabolism; 1,2-propanediol degradation. May play a role in the spatial distribution of the bacterial microcompartment (BMC) dedicated to 1,2-PD degradation, perhaps being involved in cytoskeleton dynamics; might bind GTP. This subunit is directly targeted to the BMC. Functionally, expression of a cosmid containing the full 21-gene pdu operon in E.coli allows E.coli to grow on 1,2-propanediol (1,2-PD) with the appearance of bacterial microcompartments (BMC) in its cytoplasm. In terms of biological role, the 1,2-PD-specific bacterial microcompartment (BMC) concentrates low levels of 1,2-PD catabolic enzymes, concentrates volatile reaction intermediates thus enhancing pathway flux and keeps the level of toxic, mutagenic propionaldehyde low. In Citrobacter freundii, this protein is Propanediol utilization protein PduV.